The following is a 132-amino-acid chain: Aspartate 1-decarboxylase (132 aa).

The active-site Schiff-base intermediate with substrate; via pyruvic acid is the S25. Position 25 is a pyruvic acid (Ser) (S25). T57 provides a ligand contact to substrate. Y58 acts as the Proton donor in catalysis. Substrate is bound at residue 73-75; the sequence is GAA.

It belongs to the PanD family. In terms of assembly, heterooctamer of four alpha and four beta subunits. The cofactor is pyruvate. Post-translationally, is synthesized initially as an inactive proenzyme, which is activated by self-cleavage at a specific serine bond to produce a beta-subunit with a hydroxyl group at its C-terminus and an alpha-subunit with a pyruvoyl group at its N-terminus.

The protein localises to the cytoplasm. It carries out the reaction L-aspartate + H(+) = beta-alanine + CO2. Its pathway is cofactor biosynthesis; (R)-pantothenate biosynthesis; beta-alanine from L-aspartate: step 1/1. Functionally, catalyzes the pyruvoyl-dependent decarboxylation of aspartate to produce beta-alanine. In Pelotomaculum thermopropionicum (strain DSM 13744 / JCM 10971 / SI), this protein is Aspartate 1-decarboxylase.